We begin with the raw amino-acid sequence, 246 residues long: MYTRYSYNPSLGRTYVYDNKYYKNLGAVIKNANRKKHFIEHELEEKTLDPLDRYLVAEDPFLGPGKNQKLTLFKEIRNVKPDTMKLVVNWSGKEFLRETWTRFMEDSFPIVNDQEVMDVFLVINMRPTRPNRCYKFLAQHALRCDPEYVPHEVIRIVEPSYVGSNNEYRVSLAKRGGGCPVMNLHSEYTNSFEEFINRVIWENFYKPIVYVGTDSAEEEEILLEVSLVFKIKEFAPDAPLYNGPAY.

It belongs to the polyhedrin family.

In terms of biological role, major component of the virus occlusion bodies, which are large proteinaceous structures (polyhedra), that protect the virus from the outside environment for extended periods until they are ingested by insect larvae. The sequence is that of Polyhedrin (PH) from Lepidoptera (butterflies and moths).